The primary structure comprises 242 residues: Ribosomal RNA small subunit methyltransferase G (242 aa).

S-adenosyl-L-methionine-binding positions include glycine 79, valine 130–glutamate 131, and glutamine 149.

It belongs to the methyltransferase superfamily. RNA methyltransferase RsmG family.

It is found in the cytoplasm. Functionally, specifically methylates the N7 position of a guanine in 16S rRNA. The chain is Ribosomal RNA small subunit methyltransferase G from Mycoplasmoides gallisepticum (strain R(low / passage 15 / clone 2)) (Mycoplasma gallisepticum).